Here is a 205-residue protein sequence, read N- to C-terminus: Gap junction epsilon-1 protein (205 aa).

Over 1 to 22 (MSLNYIKNFYEGCVKPPTVIGQ) the chain is Cytoplasmic. A helical membrane pass occupies residues 23-43 (FHTLFFGSVRMFFLGVLGFAV). Residues 44–74 (YGNEALHFSCDPDKREINLFCYNQFRPITPQ) lie on the Extracellular side of the membrane. 2 cysteine pairs are disulfide-bonded: C53/C161 and C64/C147. The helical transmembrane segment at 75–95 (VFWALQLVIVLLPGAIFHLYA) threads the bilayer. Residues 96–111 (ACKSINQDCILQKPVY) lie on the Cytoplasmic side of the membrane. The helical transmembrane segment at 112 to 132 (TVIYVLSVLLRISLEVFAFWL) threads the bilayer. Topologically, residues 133-170 (QIHLFGFQVKPIYLCDTESLGKKPNILKCMVPEHFEKT) are extracellular. A helical membrane pass occupies residues 171–191 (IFLIAMYTFTVITMVLCVAEV). The Cytoplasmic segment spans residues 192–205 (FEIIFRRSCFLFKR).

The protein belongs to the connexin family. Beta-type (group I) subfamily. A connexon is composed of a hexamer of connexins. In terms of tissue distribution, highly expressed in lens, where it is mainly found in lens fibers and to a lesser extent in lens epithelium. Weakly expressed in retina. Not detected in other tissues tested.

The protein resides in the cell membrane. In terms of biological role, mediates calcium-independent ATP release, suggesting activity as a hemichannel. Does not form functional gap junctions. May play a non-essential role in eye lens development. This Mus musculus (Mouse) protein is Gap junction epsilon-1 protein.